A 162-amino-acid polypeptide reads, in one-letter code: NADH-quinone oxidoreductase subunit I (162 aa).

2 4Fe-4S ferredoxin-type domains span residues L53–E83 and T93–V122. Positions 63, 66, 69, 73, 102, 105, 108, and 112 each coordinate [4Fe-4S] cluster.

This sequence belongs to the complex I 23 kDa subunit family. NDH-1 is composed of 14 different subunits. Subunits NuoA, H, J, K, L, M, N constitute the membrane sector of the complex. [4Fe-4S] cluster serves as cofactor.

It is found in the cell inner membrane. It catalyses the reaction a quinone + NADH + 5 H(+)(in) = a quinol + NAD(+) + 4 H(+)(out). Functionally, NDH-1 shuttles electrons from NADH, via FMN and iron-sulfur (Fe-S) centers, to quinones in the respiratory chain. The immediate electron acceptor for the enzyme in this species is believed to be ubiquinone. Couples the redox reaction to proton translocation (for every two electrons transferred, four hydrogen ions are translocated across the cytoplasmic membrane), and thus conserves the redox energy in a proton gradient. The polypeptide is NADH-quinone oxidoreductase subunit I (Nitrosomonas europaea (strain ATCC 19718 / CIP 103999 / KCTC 2705 / NBRC 14298)).